Consider the following 650-residue polypeptide: Secretin OutD (650 aa).

The N-terminal stretch at 1–18 is a signal peptide; the sequence is MLLLSGSVLLMASSLAWS. Residues 20–115 form an N0 region; it reads EFSASFKGTD…LATDRQPGIG (96 aa). The interval 117–181 is N1; sequence EVVTRVVPVN…TIVERVDQTG (65 aa). The tract at residues 182 to 255 is N2; the sequence is DRNVTTIPLS…MVKQLDRQQA (74 aa). The tract at residues 258-330 is N3; it reads GNTKVIYLKY…DLEQVIAQLD (73 aa). Positions 335-585 are secretin; it reads QVLVEAIIAE…LFIRPSIIRD (251 aa). The tract at residues 587 to 650 is s domain; that stretch reads SQFQSASASK…IVAFYPAGGK (64 aa).

The protein belongs to the bacterial secretin family. GSP D subfamily. Forms a cylindrical channel with 15 subunits.

It localises to the cell outer membrane. Its function is as follows. Involved in a type II secretion system (T2SS, formerly general secretion pathway, GSP) for the export of proteins. Required for the translocation of the multiple pectic enzymes. This subunit forms the outer membrane channel. The protein is Secretin OutD (outD) of Pectobacterium carotovorum subsp. carotovorum (Erwinia carotovora subsp. carotovora).